The chain runs to 862 residues: Kinesin-like protein KIN-7E (862 aa).

The Kinesin motor domain maps to 24-346 (KILVLVRLRP…LLFACCAKEV (323 aa)). Position 110–117 (110–117 (GQTSSGKT)) interacts with ATP. Residues 355–428 (VMSDKALVKQ…RLEDFMKMVE (74 aa)) are a coiled coil. 2 disordered regions span residues 463 to 505 (RTSF…QSEE) and 542 to 632 (ANGE…TPLV). The span at 465 to 476 (SFISDGTSTPLS) shows a compositional bias: polar residues. The segment covering 494 to 505 (MSPRHSGDQSEE) has biased composition (basic and acidic residues). A compositionally biased stretch (polar residues) spans 612 to 621 (DSMTSRGSDS). Lysine 734 is covalently cross-linked (Glycyl lysine isopeptide (Lys-Gly) (interchain with G-Cter in ubiquitin)).

It belongs to the TRAFAC class myosin-kinesin ATPase superfamily. Kinesin family. KIN-7 subfamily.

This is Kinesin-like protein KIN-7E from Arabidopsis thaliana (Mouse-ear cress).